A 517-amino-acid chain; its full sequence is T-complex protein 11-like protein 2 (517 aa).

Positions 1 to 59 are disordered; that stretch reads MPFNGEKQCVSEDQQSDSESSRFAEGVASLSDYECSRQSFTSDSSSKSSSPASTSPPRG. Phosphoserine is present on Ser-16. Residues 36 to 55 show a composition bias toward low complexity; the sequence is SRQSFTSDSSSKSSSPASTS.

This sequence belongs to the TCP11 family. Interacts with FMNL2; this interaction promotes muscle-derived satellite cell (MDSC) migration and differentiation.

Its subcellular location is the cytoplasm. It localises to the cytoskeleton. Its function is as follows. Promotes the migration of muscle-derived satellite cells (MDSCs) during differentiation throught interaction with FMNL2 and therefore may participate in microfilament assembly. The sequence is that of T-complex protein 11-like protein 2 from Mus musculus (Mouse).